Consider the following 819-residue polypeptide: Disintegrin and metalloproteinase domain-containing protein 9 (819 aa).

Positions 1–28 are cleaved as a signal peptide; sequence MGSGARFPSGTLRVRWLLLLGLVGPVLG. At 29–697 the chain is on the extracellular side; it reads AARPGFQQTS…YNEMNTALRD (669 aa). N-linked (GlcNAc...) asparagine glycosylation is found at N125, N144, N154, and N231. Residues 212-406 enclose the Peptidase M12B domain; sequence RYVELFIVVD…KGGNCLLNIP (195 aa). Disulfide bonds link C322/C401, C363/C385, C365/C370, C473/C493, C644/C656, C650/C662, and C664/C673. Residue H347 coordinates Zn(2+). Residue E348 is part of the active site. Zn(2+) contacts are provided by H351 and H357. N381 and N487 each carry an N-linked (GlcNAc...) asparagine glycan. The Disintegrin domain occupies 414 to 501; that stretch reads APSCGNKLVD…FCQPDVFIQN (88 aa). The EGF-like domain occupies 644–698; it reads CDVQKKCHGHGVCNSNKNCHCENGWAPPNCETKGYGGSVDSGPTYNEMNTALRDG. The chain crosses the membrane as a helical span at residues 698 to 718; the sequence is GLLVFFFLIVPLIVCAIFIFI. At 719–819 the chain is on the cytoplasmic side; that stretch reads KRDQLWRSYF…PAPPLYSSLT (101 aa). 2 disordered regions span residues 734–763 and 780–819; these read QTYE…VTPP and AKQP…SSLT. Residues 735-750 are compositionally biased toward polar residues; that stretch reads TYESDGKNQANPSRQP. Position 758 is a phosphoserine (S758). T761 bears the Phosphothreonine mark.

As to quaternary structure, interacts with SH3GL2 and SNX9 through its cytoplasmic tail. Interacts with ITGA6. Zn(2+) is required as a cofactor. Proteolytically cleaved in the trans-Golgi network before it reaches the plasma membrane to generate a mature protein. The removal of the pro-domain occurs via cleavage at two different sites. Processed most likely by a pro-protein convertase such as furin, at the boundary between the pro-domain and the catalytic domain. An additional upstream cleavage pro-protein convertase site (Arg-56/Glu-57) has an important role in the activation of ADAM9. Post-translationally, phosphorylation is induced in vitro by phorbol-12-myristate-13-acetate (PMA). In terms of tissue distribution, widely expressed. Expressed in chondrocytes. Isoform 2 is highly expressed in liver and heart.

The protein localises to the cell membrane. It is found in the secreted. With respect to regulation, synthesized as an inactive form which is proteolytically cleaved to generate an active enzyme. Processing at the upstream site is particularly important for activation of the proenzyme, whereas processing at the boundary between the pro-domain and the catalytic domain does not appear to be essential. Inhibited by hydroxamic acid-based inhibitors. Metalloprotease that cleaves and releases a number of molecules with important roles in tumorigenesis and angiogenesis, such as TEK, KDR, EPHB4, CD40, VCAM1 and CDH5. May mediate cell-cell, cell-matrix interactions and regulate the motility of cells via interactions with integrins. Functionally, may act as alpha-secretase for amyloid precursor protein (APP). The chain is Disintegrin and metalloproteinase domain-containing protein 9 (ADAM9) from Homo sapiens (Human).